Consider the following 475-residue polypeptide: Ribulose bisphosphate carboxylase large chain (475 aa).

Residues 1–2 (MS) constitute a propeptide that is removed on maturation. The residue at position 3 (Pro-3) is an N-acetylproline. Lys-14 is subject to N6,N6,N6-trimethyllysine. Residues Asn-123 and Thr-173 each coordinate substrate. Residue Lys-175 is the Proton acceptor of the active site. Lys-177 contributes to the substrate binding site. Mg(2+) contacts are provided by Lys-201, Asp-203, and Glu-204. Position 201 is an N6-carboxylysine (Lys-201). Catalysis depends on His-294, which acts as the Proton acceptor. Positions 295, 327, and 379 each coordinate substrate.

Belongs to the RuBisCO large chain family. Type I subfamily. Heterohexadecamer of 8 large chains and 8 small chains; disulfide-linked. The disulfide link is formed within the large subunit homodimers. Requires Mg(2+) as cofactor. In terms of processing, the disulfide bond which can form in the large chain dimeric partners within the hexadecamer appears to be associated with oxidative stress and protein turnover.

It localises to the plastid. The protein resides in the chloroplast. It carries out the reaction 2 (2R)-3-phosphoglycerate + 2 H(+) = D-ribulose 1,5-bisphosphate + CO2 + H2O. The catalysed reaction is D-ribulose 1,5-bisphosphate + O2 = 2-phosphoglycolate + (2R)-3-phosphoglycerate + 2 H(+). Its function is as follows. RuBisCO catalyzes two reactions: the carboxylation of D-ribulose 1,5-bisphosphate, the primary event in carbon dioxide fixation, as well as the oxidative fragmentation of the pentose substrate in the photorespiration process. Both reactions occur simultaneously and in competition at the same active site. This chain is Ribulose bisphosphate carboxylase large chain, found in Cycas taitungensis (Prince sago).